A 487-amino-acid polypeptide reads, in one-letter code: Schwannomin-interacting protein 1 (487 aa).

Disordered regions lie at residues 1-74, 88-221, 236-260, and 308-354; these read MERS…VSAL, VIDE…PVPP, FREQ…NERE, and SGSD…SLDD. Residues 14-27 show a composition bias toward basic and acidic residues; the sequence is DQGKHSDSDYREDG. Positions 32 to 67 are enriched in low complexity; it reads SDAGSSSSSSRASSQSNSTKVTPCSECKSSSSPGGS. Residues 92–106 are compositionally biased toward acidic residues; sequence WAPEEDGEEEEEEDE. Composition is skewed to basic and acidic residues over residues 107 to 123 and 153 to 162; these read RDQR…REPG and HQHDPQDLRH. S117 carries the phosphoserine modification. A compositionally biased stretch (polar residues) spans 242–255; the sequence is RNQGQARTNSTSAQ. Residues 309–323 show a composition bias toward basic and acidic residues; the sequence is GSDKDSDADDSKTET. The span at 324–335 shows a compositional bias: polar residues; sequence SLDTPLSPMSKQ. The span at 344 to 354 shows a compositional bias: acidic residues; the sequence is TTEEESESLDD. Residues 424-458 adopt a coiled-coil conformation; sequence IGQLQVIVNDLHSQIESLNEELVQLLLIRDELHTE.

This sequence belongs to the SCHIP1 family. In terms of assembly, homooligomer (via coiled coil domain). Interacts with NF2; the interaction is direct. Interacts with ANK3. As to expression, preferentially expressed in brain, skeletal muscles and heart. Also expressed in detected in pancreas, kidney, liver, lung, and placenta.

It localises to the cytoplasm. In Homo sapiens (Human), this protein is Schwannomin-interacting protein 1.